A 268-amino-acid chain; its full sequence is Uronate dehydrogenase (268 aa).

NAD(+) contacts are provided by residues 17 to 18 (GL), 37 to 39 (DIS), 55 to 56 (DL), and 75 to 79 (FGGVS). Substrate is bound by residues Ser79 and 115 to 117 (SNH). Tyr140 (proton acceptor) is an active-site residue. Lys144 provides a ligand contact to NAD(+). Substrate is bound at residue Ser169. Residue Ser170 participates in NAD(+) binding. A substrate-binding site is contributed by Arg178.

The protein belongs to the NAD(P)-dependent epimerase/dehydratase family. Homohexamer.

It carries out the reaction beta-D-galacturonate + NAD(+) = D-galactaro-1,5-lactone + NADH + H(+). The enzyme catalyses beta-D-glucuronate + NAD(+) = D-glucaro-1,5-lactone + NADH + H(+). The protein operates within carbohydrate acid metabolism; D-galacturonate degradation via prokaryotic oxidative pathway. In terms of biological role, catalyzes the oxidation of beta-D-galacturonate and beta-D-glucuronate to galactarate and D-glucarate, respectively. This chain is Uronate dehydrogenase (udh), found in Pseudomonas putida (strain ATCC 47054 / DSM 6125 / CFBP 8728 / NCIMB 11950 / KT2440).